A 219-amino-acid polypeptide reads, in one-letter code: MALLLCLVGVTAALAHGCLHCHSKFSEKFSFYRHHVNLKSWWVGDIPVSGALLTDWSDDTMKELHLAIPAEITREKLDQVATAVYQRMDQLYQGKMYFPGYFPNELRNIFREQVHLIQNAIIESRLDCQRHCGIFQYETISCNNCTDSHVACFGYNCESSEQWESAVQGLLNYINNWHKQDVSMRATPAFLVSPAFRCLEPPHLANLTLEDAAECLKQH.

An N-terminal signal peptide occupies residues 1–15 (MALLLCLVGVTAALA). Residue Asn206 is glycosylated (N-linked (GlcNAc...) asparagine).

It belongs to the Izumo family.

Its subcellular location is the secreted. In Macaca fascicularis (Crab-eating macaque), this protein is Izumo sperm-egg fusion protein 4 (IZUMO4).